Here is a 230-residue protein sequence, read N- to C-terminus: Sugar fermentation stimulation protein homolog (230 aa).

The protein belongs to the SfsA family.

This chain is Sugar fermentation stimulation protein homolog, found in Clostridium botulinum (strain Loch Maree / Type A3).